Here is a 128-residue protein sequence, read N- to C-terminus: DNA-directed RNA polymerase subunit omega (128 aa).

The tract at residues 87-106 is disordered; sequence ARSSQAAPKSAPGQEIGKSF.

The protein belongs to the RNA polymerase subunit omega family. In terms of assembly, the RNAP catalytic core consists of 2 alpha, 1 beta, 1 beta' and 1 omega subunit. When a sigma factor is associated with the core the holoenzyme is formed, which can initiate transcription.

It catalyses the reaction RNA(n) + a ribonucleoside 5'-triphosphate = RNA(n+1) + diphosphate. Functionally, promotes RNA polymerase assembly. Latches the N- and C-terminal regions of the beta' subunit thereby facilitating its interaction with the beta and alpha subunits. The polypeptide is DNA-directed RNA polymerase subunit omega (Anaplasma marginale (strain Florida)).